The chain runs to 622 residues: Microtubule-associated protein 70-1 (622 aa).

The interval 1–27 (MSDVSADGGFLSAEQATTPVAIPTPYP) is disordered. The stretch at 66–365 (DPVKVELNRL…LAISDRAAKS (300 aa)) forms a coiled coil. The segment at 250–483 (ILDRMHRQKV…YSFNKACDET (234 aa)) is required for targeting to microtubules. 2 disordered regions span residues 388–512 (SSIS…TEDN) and 579–622 (AAMR…RSTQ). Polar residues-rich tracts occupy residues 400-425 (SMSN…SNGF) and 432-453 (MRNS…TSKS). Composition is skewed to basic and acidic residues over residues 479 to 501 (ACDE…EKPP) and 579 to 591 (AAMR…DNRA). A coiled-coil region spans residues 541-590 (DKDDAIEMLAKKVETLTKAMEVEAKKMRREVAAMEKEVAAMRVDKDQDNR). A compositionally biased stretch (polar residues) spans 594–605 (SSNTKPSSNTAQ).

It belongs to the MAP70 family. Interacts with MAP70.5 and itself.

It localises to the cytoplasm. The protein resides in the cytoskeleton. It is found in the phragmoplast. The protein localises to the spindle. In terms of biological role, plant-specific protein that interact with microtubules. In association with MAP70.5, is essential for the normal banding pattern of secondary cell wall and for the proper development of xylem tracheary elements and wood formation. This Arabidopsis thaliana (Mouse-ear cress) protein is Microtubule-associated protein 70-1 (MAP70.1).